Reading from the N-terminus, the 300-residue chain is Cation-efflux pump FieF (300 aa).

Helical transmembrane passes span 12–32 (AALA…FAWW), 39–59 (ILAA…NLLV), 82–102 (AALA…LTGI), and 114–134 (PLVG…LVTF). Residues Asp-45 and Asp-49 each coordinate Zn(2+). Residues His-153 and Asp-157 each coordinate Zn(2+). Transmembrane regions (helical) follow at residues 156–176 (SDVM…YGLH) and 182–202 (FALG…YEAI).

The protein belongs to the cation diffusion facilitator (CDF) transporter (TC 2.A.4) family. FieF subfamily. In terms of assembly, homodimer.

It is found in the cell inner membrane. The catalysed reaction is Zn(2+)(in) + H(+)(out) = Zn(2+)(out) + H(+)(in). It catalyses the reaction Cd(2+)(in) + H(+)(out) = Cd(2+)(out) + H(+)(in). The enzyme catalyses Fe(2+)(in) + H(+)(out) = Fe(2+)(out) + H(+)(in). Its function is as follows. Divalent metal cation transporter which exports Zn(2+), Cd(2+) and possibly Fe(2+). May be involved in zinc and iron detoxification by efflux. The sequence is that of Cation-efflux pump FieF from Cronobacter sakazakii (strain ATCC BAA-894) (Enterobacter sakazakii).